The sequence spans 544 residues: BTB/POZ domain-containing protein At2g13690 (544 aa).

Disordered stretches follow at residues 34–66 and 82–111; these read ASPDTRSISSRNHIPAKSQQQRPKLVPCSPQSS and LSPGRVSPIDSDPTVTTMQETETTQEEEDD. The segment covering 37–55 has biased composition (polar residues); that stretch reads DTRSISSRNHIPAKSQQQR. Over residues 93–103 the composition is skewed to low complexity; it reads DPTVTTMQETE. The 84-residue stretch at 142-225 folds into the BTB domain; it reads YDARLSLKGR…MFEESNVIIK (84 aa).

Its pathway is protein modification; protein ubiquitination. Functionally, may act as a substrate-specific adapter of an E3 ubiquitin-protein ligase complex (CUL3-RBX1-BTB) which mediates the ubiquitination and subsequent proteasomal degradation of target proteins. In Arabidopsis thaliana (Mouse-ear cress), this protein is BTB/POZ domain-containing protein At2g13690 (PRL1-IFG).